The sequence spans 345 residues: Biotin synthase (345 aa).

The 219-residue stretch at 38–256 (RQVQVSTLLS…IAVARIMMPA (219 aa)) folds into the Radical SAM core domain. Residues Cys-53, Cys-57, and Cys-60 each coordinate [4Fe-4S] cluster. Residues Cys-97, Cys-128, Cys-188, and Arg-260 each contribute to the [2Fe-2S] cluster site.

Belongs to the radical SAM superfamily. Biotin synthase family. Homodimer. Requires [4Fe-4S] cluster as cofactor. The cofactor is [2Fe-2S] cluster.

The enzyme catalyses (4R,5S)-dethiobiotin + (sulfur carrier)-SH + 2 reduced [2Fe-2S]-[ferredoxin] + 2 S-adenosyl-L-methionine = (sulfur carrier)-H + biotin + 2 5'-deoxyadenosine + 2 L-methionine + 2 oxidized [2Fe-2S]-[ferredoxin]. Its pathway is cofactor biosynthesis; biotin biosynthesis; biotin from 7,8-diaminononanoate: step 2/2. Functionally, catalyzes the conversion of dethiobiotin (DTB) to biotin by the insertion of a sulfur atom into dethiobiotin via a radical-based mechanism. This chain is Biotin synthase, found in Serratia proteamaculans (strain 568).